A 335-amino-acid chain; its full sequence is Beta-ketoacyl-[acyl-carrier-protein] synthase III (335 aa).

Catalysis depends on residues Cys118 and His259. Positions 260-264 (QANER) are ACP-binding. Asn289 is an active-site residue.

It belongs to the thiolase-like superfamily. FabH family. Homodimer.

The protein localises to the cytoplasm. The catalysed reaction is malonyl-[ACP] + acetyl-CoA + H(+) = 3-oxobutanoyl-[ACP] + CO2 + CoA. It participates in lipid metabolism; fatty acid biosynthesis. Its function is as follows. Catalyzes the condensation reaction of fatty acid synthesis by the addition to an acyl acceptor of two carbons from malonyl-ACP. Catalyzes the first condensation reaction which initiates fatty acid synthesis and may therefore play a role in governing the total rate of fatty acid production. Possesses both acetoacetyl-ACP synthase and acetyl transacylase activities. Its substrate specificity determines the biosynthesis of branched-chain and/or straight-chain of fatty acids. The protein is Beta-ketoacyl-[acyl-carrier-protein] synthase III of Chlamydia caviae (strain ATCC VR-813 / DSM 19441 / 03DC25 / GPIC) (Chlamydophila caviae).